The sequence spans 130 residues: Small ribosomal subunit protein uS11 (130 aa).

It belongs to the universal ribosomal protein uS11 family. Part of the 30S ribosomal subunit. Interacts with proteins S7 and S18. Binds to IF-3.

Functionally, located on the platform of the 30S subunit, it bridges several disparate RNA helices of the 16S rRNA. Forms part of the Shine-Dalgarno cleft in the 70S ribosome. The sequence is that of Small ribosomal subunit protein uS11 from Thermotoga maritima (strain ATCC 43589 / DSM 3109 / JCM 10099 / NBRC 100826 / MSB8).